A 427-amino-acid polypeptide reads, in one-letter code: Enolase (427 aa).

Gln163 provides a ligand contact to (2R)-2-phosphoglycerate. The active-site Proton donor is the Glu205. Positions 242, 288, and 315 each coordinate Mg(2+). Lys340, Arg369, Ser370, and Lys391 together coordinate (2R)-2-phosphoglycerate. Lys340 serves as the catalytic Proton acceptor.

It belongs to the enolase family. Requires Mg(2+) as cofactor.

The protein resides in the cytoplasm. Its subcellular location is the secreted. It localises to the cell surface. It carries out the reaction (2R)-2-phosphoglycerate = phosphoenolpyruvate + H2O. It functions in the pathway carbohydrate degradation; glycolysis; pyruvate from D-glyceraldehyde 3-phosphate: step 4/5. Functionally, catalyzes the reversible conversion of 2-phosphoglycerate (2-PG) into phosphoenolpyruvate (PEP). It is essential for the degradation of carbohydrates via glycolysis. The polypeptide is Enolase (Amoebophilus asiaticus (strain 5a2)).